The sequence spans 534 residues: Peptide chain release factor 3 (534 aa).

Positions 9–278 (ARRRTFAIIS…FFVEHAPPPQ (270 aa)) constitute a tr-type G domain. Residues 18–25 (SHPDAGKT), 86–90 (DTPGH), and 140–143 (NKLD) contribute to the GTP site.

Belongs to the TRAFAC class translation factor GTPase superfamily. Classic translation factor GTPase family. PrfC subfamily.

Its subcellular location is the cytoplasm. Functionally, increases the formation of ribosomal termination complexes and stimulates activities of RF-1 and RF-2. It binds guanine nucleotides and has strong preference for UGA stop codons. It may interact directly with the ribosome. The stimulation of RF-1 and RF-2 is significantly reduced by GTP and GDP, but not by GMP. This is Peptide chain release factor 3 from Xanthomonas euvesicatoria pv. vesicatoria (strain 85-10) (Xanthomonas campestris pv. vesicatoria).